A 232-amino-acid chain; its full sequence is Small ribosomal subunit protein uS3 (232 aa).

The KH type-2 domain occupies 39-107 (VRQFLTKELA…PAQINIAEVR (69 aa)).

This sequence belongs to the universal ribosomal protein uS3 family. As to quaternary structure, part of the 30S ribosomal subunit. Forms a tight complex with proteins S10 and S14.

Its function is as follows. Binds the lower part of the 30S subunit head. Binds mRNA in the 70S ribosome, positioning it for translation. This chain is Small ribosomal subunit protein uS3, found in Erwinia tasmaniensis (strain DSM 17950 / CFBP 7177 / CIP 109463 / NCPPB 4357 / Et1/99).